Consider the following 313-residue polypeptide: Olfactory receptor 4E2 (313 aa).

Over 1 to 25 (MDSLNQTRVTEFVFLGLTDNRVLEM) the chain is Extracellular. A glycan (N-linked (GlcNAc...) asparagine) is linked at N5. Residues 26–49 (LFFMAFSAIYMLTLSGNILIIIAT) traverse the membrane as a helical segment. Over 50 to 57 (VFTPSLHT) the chain is Cytoplasmic. The chain crosses the membrane as a helical span at residues 58–79 (PMYFFLSNLSFIDICHSSVTVP). Residues 80-100 (KMLEGLLLERKTISFDNCITQ) lie on the Extracellular side of the membrane. C97 and C179 are disulfide-bonded. A helical transmembrane segment spans residues 101–120 (LFFLHLFACAEIFLLIIVAY). Residues H105 and C109 each contribute to the Cu cation site. The Cytoplasmic segment spans residues 121-139 (DRYVAICTPLHYPNVMNMR). Residues 140–158 (VCIQLVFALWLGGTVHSLG) form a helical membrane-spanning segment. At 159–195 (QTFLTIRLPYCGPNIIDSYFCDVPLVIKLACTDTYLT) the chain is on the extracellular side. A helical membrane pass occupies residues 196-219 (GILIVTNSGTISLSCFLAVVTSYM). The Cytoplasmic portion of the chain corresponds to 220-235 (VILVSLRKHSAEGRQK). A helical membrane pass occupies residues 236–258 (ALSTCSAHFMVVALFFGPCIFIY). At 259–269 (TRPDTSFSIDK) the chain is on the extracellular side. Cu cation is bound at residue R260. The helical transmembrane segment at 270 to 289 (VVSVFYTVVTPLLNPFIYTL) threads the bilayer. Topologically, residues 290 to 313 (RNEEVKSAMKQLRQRQVFFTKSYT) are cytoplasmic.

This sequence belongs to the G-protein coupled receptor 1 family.

Its subcellular location is the cell membrane. With respect to regulation, copper binding enhances receptor activity in response to odorant binding. Olfactory receptor that is activated by the binding of organosulfur odorants with thioether groups such as (methylthio)methanethiol (MTMT) and bis(methylthiomethyl) disulfide. Also binds odorants cis-cyclooctene and tert-butyl mercaptan. The activity of this receptor is mediated by G proteins which activate adenylyl cyclase. This Homo sapiens (Human) protein is Olfactory receptor 4E2.